A 198-amino-acid chain; its full sequence is Beta-crystallin A1 (198 aa).

The tract at residues methionine 1–serine 13 is N-terminal arm. Beta/gamma crystallin 'Greek key' domains follow at residues isoleucine 14–cysteine 53 and glycine 54–cysteine 100. 2 positions are modified to S-glutathionyl cysteine; alternate: cysteine 65 and cysteine 100. Cysteine 65 and cysteine 100 each carry S-methylcysteine; alternate. Residues serine 101–glutamate 106 form a connecting peptide region. 2 Beta/gamma crystallin 'Greek key' domains span residues serine 107–cysteine 148 and glycine 149–glutamine 197.

It belongs to the beta/gamma-crystallin family. Homo/heterodimer, or complexes of higher-order. The structure of beta-crystallin oligomers seems to be stabilized through interactions between the N-terminal arms. Interacts with CRYBA1.

Crystallins are the dominant structural components of the vertebrate eye lens. In Mus musculus (Mouse), this protein is Beta-crystallin A1.